The chain runs to 237 residues: tRNA1(Val) (adenine(37)-N6)-methyltransferase (237 aa).

The protein belongs to the methyltransferase superfamily. tRNA (adenine-N(6)-)-methyltransferase family.

The protein resides in the cytoplasm. The catalysed reaction is adenosine(37) in tRNA1(Val) + S-adenosyl-L-methionine = N(6)-methyladenosine(37) in tRNA1(Val) + S-adenosyl-L-homocysteine + H(+). Functionally, specifically methylates the adenine in position 37 of tRNA(1)(Val) (anticodon cmo5UAC). The protein is tRNA1(Val) (adenine(37)-N6)-methyltransferase of Parabacteroides distasonis (strain ATCC 8503 / DSM 20701 / CIP 104284 / JCM 5825 / NCTC 11152).